Here is an 897-residue protein sequence, read N- to C-terminus: uncharacterized protein (897 aa).

Disordered regions lie at residues 25-89 (RLQD…TRKR) and 106-168 (PTRL…TPPS). Composition is skewed to low complexity over residues 32-44 (SSSPSSAPSSSSS), 57-68 (SLQNSQSSSYSL), and 106-142 (PTRLTSTPSNSSSLPSIPSSSSTPSISSIPHTTSSVS). The 184-residue stretch at 263–446 (SMEQSSKCGG…YSLLKFLRIK (184 aa)) folds into the Helicase ATP-binding domain. 276–283 (DDMGLGKT) contacts ATP. Positions 397–400 (DEAH) match the DEAH box motif. An RING-type zinc finger spans residues 606 to 655 (CSVCLDPCLAPVFIIPCGHFTCQECMSMLVGQKYGSSSTSTIIAKCPMCR). The region spanning 727-890 (QARQTILDII…LSRLDKEELL (164 aa)) is the Helicase C-terminal domain.

It belongs to the SNF2/RAD54 helicase family.

The protein resides in the cytoplasm. Its subcellular location is the nucleus. This is an uncharacterized protein from Schizosaccharomyces pombe (strain 972 / ATCC 24843) (Fission yeast).